Reading from the N-terminus, the 517-residue chain is RNA-binding region-containing protein 3 (517 aa).

A disordered region spans residues 1-26; it reads MAAPEQPLAISRGCTSSSSLSPPRGD. Position 21 is a phosphoserine (Ser21). Positions 27-102 constitute an RRM 1 domain; it reads RTLLVRHLPA…HTLVVEFAKE (76 aa). Disordered stretches follow at residues 106-130 and 213-254; these read VHSP…DDKE and MPLH…DEDR. Ser108 is subject to Phosphoserine. Basic and acidic residues predominate over residues 115–130; it reads SEKKKRSDDPVEDDKE. Pro residues predominate over residues 217–230; sequence APLPPTSPQPPEEP. The segment covering 231-252 has biased composition (acidic residues); sequence PLPEEDEELSSEESEYESTDDE. One can recognise an RRM 2 domain in the interval 420-503; sequence CRIYVKNLAK…KPMVVQFARS (84 aa).

In terms of assembly, component of the U11/U12 snRNPs that are part of the U12-type spliceosome. Found in a complex with m(7)G-capped U12 snRNA. Interacts with PDCD7.

The protein resides in the nucleus. Its function is as follows. Participates in pre-mRNA U12-dependent splicing, performed by the minor spliceosome which removes U12-type introns. U12-type introns comprises less than 1% of all non-coding sequences. Binds to the 3'-stem-loop of m(7)G-capped U12 snRNA. The sequence is that of RNA-binding region-containing protein 3 (RNPC3) from Pongo abelii (Sumatran orangutan).